A 144-amino-acid chain; its full sequence is Superoxide dismutase [Mn], mitochondrial (144 aa).

Mn(2+) contacts are provided by His-10, His-58, and Asp-143.

This sequence belongs to the iron/manganese superoxide dismutase family. In terms of assembly, homotetramer. It depends on Mn(2+) as a cofactor.

It is found in the mitochondrion matrix. The enzyme catalyses 2 superoxide + 2 H(+) = H2O2 + O2. In terms of biological role, destroys superoxide anion radicals which are normally produced within the cells and which are toxic to biological systems. This is Superoxide dismutase [Mn], mitochondrial from Apostichopus californicus (California sea cucumber).